The sequence spans 197 residues: MYB-like transcription factor EOBII (197 aa).

HTH myb-type domains lie at 10-62 and 63-117; these read DAEV…LNYL and RPDV…QKHI. 2 DNA-binding regions (H-T-H motif) span residues 38–62 and 90–113; these read WNSL…LNYL and WSKI…RTRI. Residues 125–158 are disordered; sequence GQAASSEQNDHQEACTSQMSNGPNDNTIDQTYSP. Over residues 138–158 the composition is skewed to polar residues; the sequence is ACTSQMSNGPNDNTIDQTYSP.

As to expression, specifically expressed in flowers, mostly in stigmas, petal tubes and petal limbs, and, to a lower extent, in anthers and stamen. Also present at low levels in roots, stems, leaves and sepals.

Its subcellular location is the nucleus. Its function is as follows. MYB-type transcription factor controlling the production of volatile organic compounds (VOCs), including floral volatile benzenoids and phenylpropanoids (FVBP), in flowers of fragrant cultivars (e.g. cv. Mitchell and cv. V26) by regulating the expression of ODO1 and EOBI, key regulators of the shikimate pathway, and of several biosynthetic floral scent-related genes including IGS, PAL2 and CFAT. This scent, mostly produced in the evening and night by the petals, attracts the pollinators (e.g. the night-active hawkmoth pollinator Manduca sexta). Binds to and activates the ODO1 and EOBI promoters via MYB binding sites (MBS) 5'-AAACCTAAT-3' and 5'-CTAACT-3'. Regulates the promoters of IGS1, CFAT and PAL2. Controls flowers petal opening by modulating a global transcriptomic switch. The polypeptide is MYB-like transcription factor EOBII (Petunia hybrida (Petunia)).